A 120-amino-acid chain; its full sequence is Large ribosomal subunit protein bL21 (120 aa).

It belongs to the bacterial ribosomal protein bL21 family. As to quaternary structure, part of the 50S ribosomal subunit. Contacts protein L20.

In terms of biological role, this protein binds to 23S rRNA in the presence of protein L20. The polypeptide is Large ribosomal subunit protein bL21 (Roseiflexus sp. (strain RS-1)).